Here is a 474-residue protein sequence, read N- to C-terminus: Probable glycine dehydrogenase (decarboxylating) subunit 2 (474 aa).

Residue K266 is modified to N6-(pyridoxal phosphate)lysine.

This sequence belongs to the GcvP family. C-terminal subunit subfamily. As to quaternary structure, the glycine cleavage system is composed of four proteins: P, T, L and H. In this organism, the P 'protein' is a heterodimer of two subunits. The cofactor is pyridoxal 5'-phosphate.

The enzyme catalyses N(6)-[(R)-lipoyl]-L-lysyl-[glycine-cleavage complex H protein] + glycine + H(+) = N(6)-[(R)-S(8)-aminomethyldihydrolipoyl]-L-lysyl-[glycine-cleavage complex H protein] + CO2. Its function is as follows. The glycine cleavage system catalyzes the degradation of glycine. The P protein binds the alpha-amino group of glycine through its pyridoxal phosphate cofactor; CO(2) is released and the remaining methylamine moiety is then transferred to the lipoamide cofactor of the H protein. The polypeptide is Probable glycine dehydrogenase (decarboxylating) subunit 2 (Thermus thermophilus (strain ATCC 27634 / DSM 579 / HB8)).